Here is a 137-residue protein sequence, read N- to C-terminus: Protein cornichon homolog 4 (137 aa).

Helical transmembrane passes span Leu8–Leu28, Phe53–Leu73, and Leu113–Asp133.

This sequence belongs to the cornichon family.

Its subcellular location is the membrane. The polypeptide is Protein cornichon homolog 4 (Arabidopsis thaliana (Mouse-ear cress)).